Here is a 408-residue protein sequence, read N- to C-terminus: Arginine biosynthesis bifunctional protein ArgJ (408 aa).

Threonine 158, lysine 184, threonine 195, glutamate 281, asparagine 403, and threonine 408 together coordinate substrate. The Nucleophile role is filled by threonine 195.

It belongs to the ArgJ family. Heterotetramer of two alpha and two beta chains.

The protein localises to the cytoplasm. It catalyses the reaction N(2)-acetyl-L-ornithine + L-glutamate = N-acetyl-L-glutamate + L-ornithine. The catalysed reaction is L-glutamate + acetyl-CoA = N-acetyl-L-glutamate + CoA + H(+). It participates in amino-acid biosynthesis; L-arginine biosynthesis; L-ornithine and N-acetyl-L-glutamate from L-glutamate and N(2)-acetyl-L-ornithine (cyclic): step 1/1. It functions in the pathway amino-acid biosynthesis; L-arginine biosynthesis; N(2)-acetyl-L-ornithine from L-glutamate: step 1/4. Functionally, catalyzes two activities which are involved in the cyclic version of arginine biosynthesis: the synthesis of N-acetylglutamate from glutamate and acetyl-CoA as the acetyl donor, and of ornithine by transacetylation between N(2)-acetylornithine and glutamate. This is Arginine biosynthesis bifunctional protein ArgJ from Bacillus cereus (strain ATCC 14579 / DSM 31 / CCUG 7414 / JCM 2152 / NBRC 15305 / NCIMB 9373 / NCTC 2599 / NRRL B-3711).